Reading from the N-terminus, the 449-residue chain is Histone PARylation factor 1-like (449 aa).

A CCHC-type zinc finger spans residues 3 to 28 (KEDCKYWDKCYQQNPAHLSKYNHPKK). The tract at residues 18-93 (AHLSKYNHPK…AKGSYEAETE (76 aa)) is disordered. 2 stretches are compositionally biased toward basic and acidic residues: residues 28–41 (KQQEHEVDGAEGKK) and 54–69 (EQKKEEQTEPVNKDKS). The residue at position 72 (serine 72) is a Phosphoserine. The active-site Proton donor is glutamate 384.

It belongs to the HPF1 family.

The protein resides in the chromosome. It is found in the nucleus. In terms of biological role, cofactor for serine ADP-ribosylation that confers serine specificity on Parp. Switches the amino acid specificity of Parp from aspartate or glutamate to serine residues. Acts by completing the active site of Parp: forms a composite active site composed of residues from HPF1/CG1218 and Parp. The polypeptide is Histone PARylation factor 1-like (Drosophila melanogaster (Fruit fly)).